A 196-amino-acid chain; its full sequence is Holliday junction branch migration complex subunit RuvA (196 aa).

The segment at 1 to 63 is domain I; the sequence is MINKIHGKVI…ENELKLFGFL (63 aa). Residues 64–139 form a domain II region; it reads NSDERETFKS…KLLINNELES (76 aa). A region of interest (flexible linker) is located at residue serine 139. Positions 139-196 are domain III; it reads SSLFGFKELEESIVSMGFDRKIVNSKLKEACDLIEFSNLKDSEKEQFLFKEVLKRMSN.

This sequence belongs to the RuvA family. Homotetramer. Forms an RuvA(8)-RuvB(12)-Holliday junction (HJ) complex. HJ DNA is sandwiched between 2 RuvA tetramers; dsDNA enters through RuvA and exits via RuvB. An RuvB hexamer assembles on each DNA strand where it exits the tetramer. Each RuvB hexamer is contacted by two RuvA subunits (via domain III) on 2 adjacent RuvB subunits; this complex drives branch migration. In the full resolvosome a probable DNA-RuvA(4)-RuvB(12)-RuvC(2) complex forms which resolves the HJ.

The protein resides in the cytoplasm. Its function is as follows. The RuvA-RuvB-RuvC complex processes Holliday junction (HJ) DNA during genetic recombination and DNA repair, while the RuvA-RuvB complex plays an important role in the rescue of blocked DNA replication forks via replication fork reversal (RFR). RuvA specifically binds to HJ cruciform DNA, conferring on it an open structure. The RuvB hexamer acts as an ATP-dependent pump, pulling dsDNA into and through the RuvAB complex. HJ branch migration allows RuvC to scan DNA until it finds its consensus sequence, where it cleaves and resolves the cruciform DNA. This Borrelia garinii subsp. bavariensis (strain ATCC BAA-2496 / DSM 23469 / PBi) (Borreliella bavariensis) protein is Holliday junction branch migration complex subunit RuvA.